The chain runs to 259 residues: L-cysteine S-thiosulfotransferase subunit SoxA (259 aa).

Positions 1–23 are cleaved as a signal peptide; the sequence is MRKLWFLPILLGAVGGVSLYAIA. The 86-residue stretch at 50 to 135 folds into the Cytochrome c domain; sequence VYAEQGRDMF…SIATYVATLS (86 aa). Heme c-binding residues include C70, C73, H74, C108, C171, C174, and H175. R216 contributes to the substrate binding site. C220 is a binding site for heme c. Residue C220 is the Cysteine persulfide intermediate of the active site.

The protein belongs to the SoxA family. As to quaternary structure, heterodimer of SoxA and SoxX. The cofactor is heme c. Cysteine persulfide at Cys-220.

The protein resides in the periplasm. It carries out the reaction L-cysteinyl-[SoxY protein] + thiosulfate + 2 Fe(III)-[cytochrome c] = S-sulfosulfanyl-L-cysteinyl-[SoxY protein] + 2 Fe(II)-[cytochrome c] + 2 H(+). The catalysed reaction is S-sulfanyl-L-cysteinyl-[SoxY protein] + thiosulfate + 2 Fe(III)-[cytochrome c] = S-(2-sulfodisulfanyl)-L-cysteinyl-[SoxY protein] + 2 Fe(II)-[cytochrome c] + 2 H(+). In terms of biological role, C-type diheme cytochrome, which is part of the SoxAX cytochrome complex involved in sulfur oxidation. The SoxAX complex catalyzes the formation of a heterodisulfide bond between the conserved cysteine residue on a sulfur carrier SoxYZ complex subunit SoxY and thiosulfate or other inorganic sulfur substrates. This leads to the liberation of two electrons, which may be transferred from the SoxAX complex to another cytochrome c that then channels them into the respiratory electron transport chain. Some electrons may be used for reductive CO(2) fixation. This is L-cysteine S-thiosulfotransferase subunit SoxA from Hydrogenobacter thermophilus (strain DSM 6534 / IAM 12695 / TK-6).